The chain runs to 237 residues: Leucyl/phenylalanyl-tRNA--protein transferase (237 aa).

It belongs to the L/F-transferase family.

Its subcellular location is the cytoplasm. The catalysed reaction is N-terminal L-lysyl-[protein] + L-leucyl-tRNA(Leu) = N-terminal L-leucyl-L-lysyl-[protein] + tRNA(Leu) + H(+). It carries out the reaction N-terminal L-arginyl-[protein] + L-leucyl-tRNA(Leu) = N-terminal L-leucyl-L-arginyl-[protein] + tRNA(Leu) + H(+). It catalyses the reaction L-phenylalanyl-tRNA(Phe) + an N-terminal L-alpha-aminoacyl-[protein] = an N-terminal L-phenylalanyl-L-alpha-aminoacyl-[protein] + tRNA(Phe). Functionally, functions in the N-end rule pathway of protein degradation where it conjugates Leu, Phe and, less efficiently, Met from aminoacyl-tRNAs to the N-termini of proteins containing an N-terminal arginine or lysine. The sequence is that of Leucyl/phenylalanyl-tRNA--protein transferase from Shewanella baltica (strain OS195).